The primary structure comprises 595 residues: MFS-type transporter phomT (595 aa).

Residues 1 to 11 (MESDGKSDRTK) show a composition bias toward basic and acidic residues. The tract at residues 1–62 (MESDGKSDRT…HVSADDGPVD (62 aa)) is disordered. Residues 30-48 (PGHSTDTEGNGSDNNNTQV) are compositionally biased toward polar residues. N-linked (GlcNAc...) asparagine glycosylation is found at Asn39 and Asn44. The next 3 helical transmembrane spans lie at 91–111 (IILLALELAVLCVALDNTIVA), 126–146 (DVGWYGSAYLLTLCAFQLFFG), and 156–176 (WVFLSCLFIFEIGSLICGVAP). Asn177 is a glycosylation site (N-linked (GlcNAc...) asparagine). The next 3 helical transmembrane spans lie at 186 to 206 (AVAGLGAAGIFSGALIIIAFS), 217 to 237 (ALISAIFGISSVIGPLLGGVF), and 245 to 265 (WCFYINLPIGGVTAVALVFFL). Asn277 carries N-linked (GlcNAc...) asparagine glycosylation. 7 helical membrane-spanning segments follow: residues 290 to 310 (IGTAIFLPCIVCILLALQWGG), 320 to 340 (VVALLVLFGVLLITFVGLQFW), 362 to 382 (VFTGLVGASFFIMVYYLPIWF), 409 to 429 (IVGGVFVSFTGYYTPMMYALP), 451 to 471 (WIGYQILFGLGLGLGMQQGIV), 483 to 503 (AIGTSLQVFAQMFGGSLFVSV), and 559 to 579 (VIWTFRTALITTCLSVLAVIF).

Belongs to the major facilitator superfamily. TCR/Tet family.

Its subcellular location is the cell membrane. In terms of biological role, MFS-type transporter; part of the gene cluster that mediates the biosynthesis of the phomopsins, a group of hexapeptide mycotoxins which infects lupins and causes lupinosis disease in livestock. PhomT is likely to be involved in the cellular export of phomopsins. This is MFS-type transporter phomT from Diaporthe leptostromiformis (Lupinosis disease fungus).